The following is a 662-amino-acid chain: Cytochrome bo(3) ubiquinol oxidase subunit 1 (662 aa).

Residues 1–14 (MFGKLTFDAIPYHE) lie on the Extracellular side of the membrane. A helical transmembrane segment spans residues 15–35 (PIIMITYIAIILIALCIASTI). Residues 36–58 (TYYKKWKYLWYEWFTTVDHKKIS) are Cytoplasmic-facing. The chain crosses the membrane as a helical span at residues 59–79 (IMYGILAFVMLFRGFVDAILM). Residues Arg71, Asp75, and His98 each coordinate a ubiquinone. Residues 80–106 (RTQQVVASAGFKGFLPPHHYDQIFTAH) are Extracellular-facing. His106 contributes to the heme b binding site. Residues 107 to 127 (GVIMIFFVAMPLVIGLMNLVI) form a helical membrane-spanning segment. The Cytoplasmic segment spans residues 128-145 (PLQIGARDVAFPFLNNLS). The chain crosses the membrane as a helical span at residues 146 to 166 (FWLNVSSAVLLTLSLGIGEFA). Topologically, residues 167–189 (QTGWLAYPPLSGIKYSSGVGVDY) are extracellular. Position 170 (Trp170) interacts with heme b. The chain crosses the membrane as a helical span at residues 190-210 (WIWSLQISGVGTTLTGINFLV). The Cytoplasmic portion of the chain corresponds to 211 to 232 (TILKMRAPGMSFFKMPVFTWTS). A helical membrane pass occupies residues 233–253 (LCTNILIVISFPVLTVTLVLL). Residues 254–277 (TLDRYFNFHFFTNDLGGNAMMYVN) lie on the Extracellular side of the membrane. A helical membrane pass occupies residues 278–298 (LIWIWGHPEVYILVLPVFGVF). Residue His284 coordinates Cu(2+). The 1'-histidyl-3'-tyrosine (His-Tyr) cross-link spans 284–288 (HPEVY). Tyr288 provides a ligand contact to Fe(II)-heme o. At 299 to 309 (SEVVATFSKKR) the chain is on the cytoplasmic side. A helical transmembrane segment spans residues 310-330 (LFGYVSLVWATLSITILSFIV). At 331 to 346 (WLHHFFTMGAGADVNT) the chain is on the extracellular side. Positions 333 and 334 each coordinate Cu(2+). The chain crosses the membrane as a helical span at residues 347–367 (FFGITTMIIAIPTGVKIFNWL). The Cytoplasmic portion of the chain corresponds to 368 to 380 (FTIYQGRVHMHSS). A helical transmembrane segment spans residues 381–401 (ILWTLGFLVTFSIGGMTGVLL). At 402–413 (SVPPADFVLHNS) the chain is on the extracellular side. Fe(II)-heme o is bound by residues His411 and His419. Residues 414 to 434 (LFLVAHFHNVIIGGVVFGCFA) form a helical membrane-spanning segment. Heme b is bound at residue His421. Topologically, residues 435–456 (GINYWFPKLFGFVLNEIWGKRA) are cytoplasmic. A helical transmembrane segment spans residues 457 to 477 (FWFWIIGFFLAFIPLYFLGLM). Topologically, residues 478-493 (GMTRRLSQNIDSEFHM) are extracellular. The heme b site is built by Arg481 and Arg482. The helical transmembrane segment at 494–514 (LLCIAAIGACFIGIGIICQVI) threads the bilayer. Residues 515–586 (QFFISIKERR…INSINYHDIH (72 aa)) are Cytoplasmic-facing. The chain crosses the membrane as a helical span at residues 587–607 (MPKNTGLGFMISIFSLFFGFS). Ala608 is a topological domain (extracellular). The helical transmembrane segment at 609-629 (VWHITWLCILSFLAIIISLFI) threads the bilayer. Residues 630–662 (NSLNEDTEYTISAEEIKKIEHQYWKNIQKAGLK) lie on the Cytoplasmic side of the membrane.

The protein belongs to the heme-copper respiratory oxidase family. In terms of assembly, the cytochrome bo(3) ubiquinol oxidase complex is a heterooctamer of two A chains, two B chains, two C chains and two D chains. Requires Cu(2+) as cofactor. Heme b serves as cofactor. The cofactor is Fe(II)-heme o.

The protein localises to the cell membrane. It carries out the reaction 2 a ubiquinol + O2 + n H(+)(in) = 2 a ubiquinone + 2 H2O + n H(+)(out). In terms of biological role, cytochrome bo(3) ubiquinol oxidase is the terminal enzyme in the aerobic respiratory chain. Catalyzes the four-electron reduction of O2 to water, using a ubiquinol as a membrane soluble electron donor for molecular oxygen reduction. Has proton pump activity across the membrane in addition to electron transfer, pumping 2 protons/electron and generating a proton motive force. All the redox centers of this enzyme complex are located within the largest subunit, subunit I. Protons are probably pumped via D- and K- channels found in this subunit. This is Cytochrome bo(3) ubiquinol oxidase subunit 1 (cyoB) from Buchnera aphidicola subsp. Acyrthosiphon pisum (strain APS) (Acyrthosiphon pisum symbiotic bacterium).